A 358-amino-acid polypeptide reads, in one-letter code: Trace amine-associated receptor 7b (358 aa).

At 1–47 (MATDDDRFPWDQDSILSRDLLSASSMQLCYEKLNRSCVRSPYSPGPR) the chain is on the extracellular side. N-linked (GlcNAc...) asparagine glycosylation is present at asparagine 34. Disulfide bonds link cysteine 37-cysteine 201 and cysteine 120-cysteine 205. A helical membrane pass occupies residues 48-68 (LILYAVFGFGAVLAVCGNLLV). Topologically, residues 69–83 (MTSILHFRQLHSPAN) are cytoplasmic. The chain crosses the membrane as a helical span at residues 84 to 104 (FLVASLACADFLVGLTVMPFS). The Extracellular portion of the chain corresponds to 105 to 125 (MVRSVEGCWYFGDIYCKFHSS). A helical transmembrane segment spans residues 126 to 147 (FDGSFCYSSIFHLCFISADRYI). At 148–166 (AVSDPLIYPTRFTASVSGK) the chain is on the cytoplasmic side. Residues 167–187 (CITFSWLLSIIYSFSLFYTGV) traverse the membrane as a helical segment. Residues 188–211 (NEAGLEDLVSALTCVGGCQIAVNQ) lie on the Extracellular side of the membrane. Asparagine 210 is a glycosylation site (N-linked (GlcNAc...) asparagine). A helical membrane pass occupies residues 212–232 (SWVFINFLLFLVPALVMMTVY). Over 233–274 (SKIFLIAKQQAQNIEKMGKQTARASESYKDRVAKRERKAAKT) the chain is Cytoplasmic. Residues 275–295 (LGIAVAAFLLSWLPYFIDSII) traverse the membrane as a helical segment. Residues 296–309 (DAFLGFVTPTYVYE) lie on the Extracellular side of the membrane. The chain crosses the membrane as a helical span at residues 310 to 332 (ILVWIGYYNSAMNPLIYAFFYPW). At 333–358 (FRKAIKLIVTGKILRENSSATNLFPE) the chain is on the cytoplasmic side.

It belongs to the G-protein coupled receptor 1 family.

It is found in the cell membrane. Olfactory receptor specific for N,N-dimethylalkylamines trace amines, such as N,N-dimethylcyclohexylamine. Trace amine compounds are enriched in animal body fluids and act on trace amine-associated receptors (TAARs) to elicit both intraspecific and interspecific innate behaviors. Ligand-binding causes a conformation change that triggers signaling via G(s)-class of G alpha proteins (GNAL or GNAS). The sequence is that of Trace amine-associated receptor 7b from Rattus norvegicus (Rat).